Consider the following 177-residue polypeptide: Large ribosomal subunit protein uL16m (177 aa).

This sequence belongs to the universal ribosomal protein uL16 family.

The protein resides in the mitochondrion. This is Large ribosomal subunit protein uL16m (RPL16) from Brassica napus (Rape).